Consider the following 143-residue polypeptide: Transcriptional regulator MraZ (143 aa).

2 consecutive SpoVT-AbrB domains span residues 5–47 (TFTP…PREE) and 76–119 (ADEQ…DAQA).

It belongs to the MraZ family. In terms of assembly, forms oligomers.

The protein resides in the cytoplasm. The protein localises to the nucleoid. The chain is Transcriptional regulator MraZ from Corynebacterium urealyticum (strain ATCC 43042 / DSM 7109).